Reading from the N-terminus, the 356-residue chain is MLPSTLQALTKKVLATQLISEDDYYTLKCCGLWWHEAPLMLCYDKNHQMLVKTPILKEGLLLNTALMKAVQENNYELIMLFTEWGANINYGLLSVNMEHTRNLCRKLGAKEGLEASEILQFFFKTKRHKTSSNIILCHELFSNNLLLQNVDMEELKMIIYWDLKDLTDNIILDDNTSLSEMLTKYWYGIAVRYKLKEAIQYFYQEYEQLNEWRLNCALSFNNVFDLHEIHNTGKVYMDIDEMMRLACIRDNNFLTIYYCFALGADINQAMFTSILNYNVFNMFFCMDLGANAIEESKALAEQKNYHLIVNMLSFKNYSPDPFLISKIIDPKKINTMLKSYYSKNMSTFDYMCIGYF.

The ANK repeat unit spans residues leucine 61–leucine 93.

The protein belongs to the asfivirus MGF 360 family.

Plays a role in virus cell tropism, and may be required for efficient virus replication in macrophages. This is Protein MGF 360-19R from African swine fever virus (isolate Pig/Kenya/KEN-50/1950) (ASFV).